We begin with the raw amino-acid sequence, 353 residues long: Guanine nucleotide-binding protein subunit alpha (353 aa).

The segment at 1–21 (MGCGMSTEEKEGKARNEEIEN) is disordered. The N-myristoyl glycine moiety is linked to residue Gly2. The S-palmitoyl cysteine moiety is linked to residue Cys3. A compositionally biased stretch (basic and acidic residues) spans 7–21 (TEEKEGKARNEEIEN). Residues 32-353 (NEIKMLLLGA…QENLRLCGLI (322 aa)) form the G-alpha domain. The G1 motif stretch occupies residues 35–48 (KMLLLGAGESGKST). Residues Glu43, Ser44, Gly45, Lys46, Ser47, Thr48, Asp150, Leu175, Thr181, Gly203, Asn269, Lys270, Asp272, and Ala325 each coordinate GTP. Ser47 provides a ligand contact to Mg(2+). Positions 173–181 (DVLRSRVKT) are G2 motif. Thr181 contributes to the Mg(2+) binding site. The segment at 196 to 205 (YRMFDVGGQR) is G3 motif. The segment at 265–272 (ILFLNKID) is G4 motif. A G5 motif region spans residues 323–328 (TCATDT).

It belongs to the G-alpha family. G(q) subfamily. G proteins are composed of 3 units; alpha, beta and gamma. The alpha chain contains the guanine nucleotide binding site. Requires Mg(2+) as cofactor.

Its function is as follows. Guanine nucleotide-binding proteins (G proteins) are involved as modulators or transducers in various transmembrane signaling systems. Plays a role in pathogenicity, specifically in appressorium formation in rice blast disease. Also involved in mating. The sequence is that of Guanine nucleotide-binding protein subunit alpha (MAGB) from Pyricularia oryzae (strain 70-15 / ATCC MYA-4617 / FGSC 8958) (Rice blast fungus).